Here is a 172-residue protein sequence, read N- to C-terminus: Ribosome maturation factor RimM (172 aa).

A PRC barrel domain is found at 95 to 168 (DEGEFYYHQI…RVDVAIMEGL (74 aa)).

Belongs to the RimM family. As to quaternary structure, binds ribosomal protein uS19.

It localises to the cytoplasm. An accessory protein needed during the final step in the assembly of 30S ribosomal subunit, possibly for assembly of the head region. Essential for efficient processing of 16S rRNA. May be needed both before and after RbfA during the maturation of 16S rRNA. It has affinity for free ribosomal 30S subunits but not for 70S ribosomes. The polypeptide is Ribosome maturation factor RimM (Streptococcus uberis (strain ATCC BAA-854 / 0140J)).